The chain runs to 325 residues: MLVISANEQRNLVNMNEVIAYAALALKEFSAERTITPIRGSLPFANEKNTALIMPSVAEGLEALGLKVVTVVPENKKIGKKTINGIVMLSDFQTGEPLALLEGSYLTMIRTGALSGVATKHLARHNAKTLCIIGTGEQAKGIAEAVFAVRDIEKVILYNRTEEKAYAFSQYIQEKFGKPAYVHTNANEAISEADIIVTTTNASTPVFSEKLQKGVHVNAVGSFKPSMQELPSHAIVGANKVVVESKEAALDETGDLQVPIKEGLFKANAIHAELGQIISGEKAGRENDEEITVFKSVGLAVVDIIVAKYLYEKAVESGVGNKIEF.

The protein belongs to the ornithine cyclodeaminase/mu-crystallin family.

It carries out the reaction L-proline + NAD(+) = 1-pyrroline-2-carboxylate + NADH + H(+). The catalysed reaction is L-proline + NADP(+) = 1-pyrroline-2-carboxylate + NADPH + H(+). In terms of biological role, catalyzes the reduction of Delta(1)-pyrroline-2-carboxylate (Pyr2C) to L-proline, using preferentially NADPH over NADH as the electron donor. Is likely involved in a degradation pathway that converts trans-3-hydroxy-L-proline (t3LHyp) to L-proline. This chain is Delta(1)-pyrroline-2-carboxylate reductase, found in Bacillus thuringiensis subsp. konkukian (strain 97-27).